The sequence spans 700 residues: mRNA cap guanine-N(7) methyltransferase (700 aa).

Composition is skewed to basic and acidic residues over residues 1–10 and 52–67; these read MVYDPIRDCD and EPPRAASVHEDAESHR. Disordered stretches follow at residues 1–263 and 277–392; these read MVYD…SVLR and AHAN…ERNK. A compositionally biased stretch (polar residues) spans 113-128; it reads RSPSMSLSPRSQNQSL. Composition is skewed to low complexity over residues 129 to 144 and 220 to 241; these read PYPSSRPGSAAGSAHP and PQPTTTPSSPSTSQHTPYTPHH. The region spanning 429 to 700 is the mRNA cap 0 methyltransferase domain; the sequence is SPIIGLKKFN…LYMGFAFEKM (272 aa). 438–439 serves as a coordination point for mRNA; it reads NN. 6 residues coordinate S-adenosyl-L-methionine: Lys-442, Gly-461, Asp-483, Asp-512, Gln-538, and Tyr-543.

It belongs to the class I-like SAM-binding methyltransferase superfamily. mRNA cap 0 methyltransferase family.

The protein localises to the nucleus. The enzyme catalyses a 5'-end (5'-triphosphoguanosine)-ribonucleoside in mRNA + S-adenosyl-L-methionine = a 5'-end (N(7)-methyl 5'-triphosphoguanosine)-ribonucleoside in mRNA + S-adenosyl-L-homocysteine. Its function is as follows. Responsible for methylating the 5'-cap structure of mRNAs. The protein is mRNA cap guanine-N(7) methyltransferase (ABD1) of Cryptococcus neoformans var. neoformans serotype D (strain B-3501A) (Filobasidiella neoformans).